Reading from the N-terminus, the 122-residue chain is UPF0102 protein Gmet_2864 (122 aa).

This sequence belongs to the UPF0102 family.

The chain is UPF0102 protein Gmet_2864 from Geobacter metallireducens (strain ATCC 53774 / DSM 7210 / GS-15).